The chain runs to 249 residues: MRQKIVAGNWKMNGQIQQVTELVSQIEKLIGFDCAAQVAVMPPSIYIPKVRDCLRTGKIVVGAQNVYPKDYGAYTGELSAPMLKDFDCRYVLVGHSERRQFFHEDENFVAQKFHHVKDHGMIPVLCVGETLSERENGKTEQVIAQQVLAVSAKGKDCFRDCVVAYEPVWAIGTGKTATPEQAQKIHQFIRDLVGEINDSDAKHLTLIYGGSVNENNAKALFSMPDIDGGLVGGASLNAKQFVEIVKCIN.

Position 9-11 (9-11) interacts with substrate; it reads NWK. The active-site Electrophile is the H95. E166 functions as the Proton acceptor in the catalytic mechanism. Residues G172, S211, and 232 to 233 contribute to the substrate site; that span reads GG.

This sequence belongs to the triosephosphate isomerase family. As to quaternary structure, homodimer.

The protein resides in the cytoplasm. The enzyme catalyses D-glyceraldehyde 3-phosphate = dihydroxyacetone phosphate. It functions in the pathway carbohydrate biosynthesis; gluconeogenesis. The protein operates within carbohydrate degradation; glycolysis; D-glyceraldehyde 3-phosphate from glycerone phosphate: step 1/1. Functionally, involved in the gluconeogenesis. Catalyzes stereospecifically the conversion of dihydroxyacetone phosphate (DHAP) to D-glyceraldehyde-3-phosphate (G3P). This chain is Triosephosphate isomerase, found in Legionella pneumophila (strain Lens).